A 124-amino-acid polypeptide reads, in one-letter code: Small ribosomal subunit protein bS6 (124 aa).

The segment covering 105 to 115 (EVQHEEARKSA) has biased composition (basic and acidic residues). Positions 105 to 124 (EVQHEEARKSAQSDAPVAAA) are disordered.

The protein belongs to the bacterial ribosomal protein bS6 family.

Functionally, binds together with bS18 to 16S ribosomal RNA. This is Small ribosomal subunit protein bS6 from Polynucleobacter necessarius subsp. necessarius (strain STIR1).